Consider the following 299-residue polypeptide: uncharacterized protein (299 aa).

The chain crosses the membrane as a helical span at residues 4–20 (LFFIFVMLIVLLCGCTS).

Its subcellular location is the membrane. This is an uncharacterized protein from Methanocaldococcus jannaschii (strain ATCC 43067 / DSM 2661 / JAL-1 / JCM 10045 / NBRC 100440) (Methanococcus jannaschii).